Reading from the N-terminus, the 433-residue chain is Probable M18 family aminopeptidase 2 (433 aa).

Zn(2+) is bound by residues H84, H161, and H409.

It belongs to the peptidase M18 family. The cofactor is Zn(2+).

The protein is Probable M18 family aminopeptidase 2 (apeB) of Clostridium acetobutylicum (strain ATCC 824 / DSM 792 / JCM 1419 / IAM 19013 / LMG 5710 / NBRC 13948 / NRRL B-527 / VKM B-1787 / 2291 / W).